The sequence spans 391 residues: Coiled-coil domain-containing protein 85C-A (391 aa).

Coiled coils occupy residues 23 to 87 (KCSK…ELCC) and 121 to 146 (FQQK…KEII). The segment at 154 to 212 (NGAGSRSSIDSQSSLSNLNGGSATVRDVGDGSSTSSTGSAGSPDHHHSHIHKPTEGKIT) is disordered. Composition is skewed to low complexity over residues 158–175 (SRSS…NGGS) and 183–195 (DGSS…SAGS).

Belongs to the CCDC85 family.

It localises to the cell junction. The protein resides in the tight junction. Its subcellular location is the adherens junction. In terms of biological role, may play a role in cell-cell adhesion and epithelium development through its interaction with proteins of the beta-catenin family. May play an important role in cortical development, especially in the maintenance of radial glia. This chain is Coiled-coil domain-containing protein 85C-A (ccdc85ca), found in Danio rerio (Zebrafish).